Reading from the N-terminus, the 309-residue chain is Serine/threonine-protein phosphatase CPPED1 (309 aa).

The segment at 47 to 250 (WRIGDCDSGG…FSGHYHRNAG (204 aa)) is catalytic. Residues Asp-51, Asp-88, Asn-125, and His-244 each coordinate a divalent metal cation.

It belongs to the metallophosphoesterase superfamily. CPPED1 family. Requires a divalent metal cation as cofactor.

It localises to the cytoplasm. It catalyses the reaction O-phospho-L-seryl-[protein] + H2O = L-seryl-[protein] + phosphate. The catalysed reaction is O-phospho-L-threonyl-[protein] + H2O = L-threonyl-[protein] + phosphate. Functionally, protein phosphatase involved in the dephosphorylation of AKT kinase family. The protein is Serine/threonine-protein phosphatase CPPED1 (cpped1) of Danio rerio (Zebrafish).